The primary structure comprises 439 residues: FK506-binding protein 59 (439 aa).

2 consecutive PPIase FKBP-type domains span residues 32–120 and 149–235; these read GCTV…LGWK and GAFV…VDCG. 3 TPR repeats span residues 252–285, 297–330, and 331–364; these read AKVYKEKGTNYFKKENWALAIKMYTKCKNILPTT, VATHSNIALCHQKSNDHFEAKQECNEVLALDKNN, and VKALYRRGQCNLTINELEDALEDFQKVIQLEPGN.

As to quaternary structure, interacts with inaD and trpl, and may be part of the inaD signaling complex. In terms of tissue distribution, expression in the embryo is limited to three tissues: lymph glands, Garland cells and oenocyte cells.

The enzyme catalyses [protein]-peptidylproline (omega=180) = [protein]-peptidylproline (omega=0). In terms of biological role, may have a role in phototransduction; inhibits or prevents Ca(2+) induced stimulation of the trpl ion channel. This chain is FK506-binding protein 59, found in Drosophila melanogaster (Fruit fly).